A 213-amino-acid polypeptide reads, in one-letter code: Retinitis pigmentosa 9 protein homolog (213 aa).

Residues 1–61 (MSSGAGSRRP…IKEDETKPED (61 aa)) form a disordered region. Residues 1–147 (MSSGAGSRRP…RENKRHEKDV (147 aa)) are PIM1-binding. 2 stretches are compositionally biased toward basic and acidic residues: residues 9-21 (RPREPPEHELQRR) and 52-61 (IKEDETKPED). The CCHC-type zinc finger occupies 96-114 (QCWRCKRYGHRTGDKECPF). Lys121 is covalently cross-linked (Glycyl lysine isopeptide (Lys-Gly) (interchain with G-Cter in SUMO2)). The disordered stretch occupies residues 154 to 213 (QLLEDSTSDDDGSSSSSSGDREKRKKRKKKEKHKKRKKEKKKKKKRKHKASKSSESSDSE). The segment covering 176-204 (KRKKRKKKEKHKKRKKEKKKKKKRKHKAS) has biased composition (basic residues). Ser204 and Ser206 each carry phosphoserine; by PIM1; in vitro.

In terms of assembly, binds to PIM1. Binds to ZNHIT4. As to expression, highly expressed in the testis, moderately in the kidney, liver and spleen, and weakly in the skeletal muscle and heart.

The protein localises to the nucleus. Its function is as follows. Is thought to be a target protein for the PIM1 kinase. May play some roles in B-cell proliferation in association with PIM1. The sequence is that of Retinitis pigmentosa 9 protein homolog (rp9) from Mus musculus (Mouse).